The primary structure comprises 324 residues: Cuticle collagen lon-3 (324 aa).

A signal peptide spans 1-30 (MSVTTATSGALIFSGASLLVSLFAAASIYS). Residues 119-324 (VENTCPTGPD…AWRRKHKRVY (206 aa)) form a disordered region. 3 triple-helical region regions span residues 129-152 (GEEGEQGPDGQDGVDGVPGFDGQD), 170-229 (GLPG…KGDD), and 235-294 (GRQG…SGLP). 5 stretches are compositionally biased toward low complexity: residues 136 to 151 (PDGQDGVDGVPGFDGQ), 168 to 181 (PQGLPGPQGSQGAP), 210 to 223 (PTGAPGDDGAPGAS), 235 to 246 (GRQGQRGQPGEQ), and 261 to 273 (EGPPGVEGEVGVP). Residues 296–311 (KDAEYCKCPTRDDGGN) are compositionally biased toward basic and acidic residues. Basic residues predominate over residues 314 to 324 (RAWRRKHKRVY).

It belongs to the cuticular collagen family. Collagen polypeptide chains are complexed within the cuticle by disulfide bonds and other types of covalent cross-links.

In terms of biological role, nematode cuticles are composed largely of collagen-like proteins. The cuticle functions both as an exoskeleton and as a barrier to protect the worm from its environment. Dose-dependent regulator of body length and shape. The sequence is that of Cuticle collagen lon-3 (lon-3) from Caenorhabditis elegans.